The following is a 431-amino-acid chain: Histidinol dehydrogenase (431 aa).

NAD(+) contacts are provided by tyrosine 127, glutamine 189, and asparagine 212. Residues serine 237, glutamine 259, and histidine 262 each coordinate substrate. Zn(2+) contacts are provided by glutamine 259 and histidine 262. Catalysis depends on proton acceptor residues glutamate 326 and histidine 327. Positions 327, 360, 414, and 419 each coordinate substrate. Aspartate 360 serves as a coordination point for Zn(2+). Histidine 419 is a Zn(2+) binding site.

The protein belongs to the histidinol dehydrogenase family. The cofactor is Zn(2+).

It catalyses the reaction L-histidinol + 2 NAD(+) + H2O = L-histidine + 2 NADH + 3 H(+). It functions in the pathway amino-acid biosynthesis; L-histidine biosynthesis; L-histidine from 5-phospho-alpha-D-ribose 1-diphosphate: step 9/9. Its function is as follows. Catalyzes the sequential NAD-dependent oxidations of L-histidinol to L-histidinaldehyde and then to L-histidine. In Xylella fastidiosa (strain 9a5c), this protein is Histidinol dehydrogenase.